Consider the following 110-residue polypeptide: Mitochondrial pyruvate carrier 1 (110 aa).

2 helical membrane passes run 20–36 (HFWG…AGLV) and 44–61 (MISG…ALFM).

Belongs to the mitochondrial pyruvate carrier (MPC) (TC 2.A.105) family.

It is found in the mitochondrion inner membrane. In terms of biological role, mediates the uptake of pyruvate into mitochondria. In Arabidopsis thaliana (Mouse-ear cress), this protein is Mitochondrial pyruvate carrier 1.